We begin with the raw amino-acid sequence, 235 residues long: Adenosine 5'-phosphosulfate reductase (235 aa).

[4Fe-4S] cluster is bound by residues cysteine 121, cysteine 122, cysteine 204, and cysteine 207. Cysteine 230 (nucleophile; cysteine thiosulfonate intermediate) is an active-site residue.

The protein belongs to the PAPS reductase family. CysH subfamily. [4Fe-4S] cluster serves as cofactor.

The protein resides in the cytoplasm. It catalyses the reaction [thioredoxin]-disulfide + sulfite + AMP + 2 H(+) = adenosine 5'-phosphosulfate + [thioredoxin]-dithiol. It functions in the pathway sulfur metabolism; hydrogen sulfide biosynthesis; sulfite from sulfate. Its function is as follows. Catalyzes the formation of sulfite from adenosine 5'-phosphosulfate (APS) using thioredoxin as an electron donor. This is Adenosine 5'-phosphosulfate reductase from Geobacillus sp. (strain WCH70).